We begin with the raw amino-acid sequence, 631 residues long: 2-isopropylmalate synthase 2, chloroplastic (631 aa).

The N-terminal 46 residues, 1 to 46, are a transit peptide targeting the chloroplast; it reads MESSILKSPNLSSPSFGVPSIPALSSSSTSPFSSLHLRSQNHRTIS. The 274-residue stretch at 87-360 folds into the Pyruvate carboxyltransferase domain; sequence VRIFDTTLRD…FTGIDTRHIV (274 aa). Positions 96, 293, and 329 each coordinate a divalent metal cation.

It belongs to the alpha-IPM synthase/homocitrate synthase family. LeuA type 1 subfamily. Homotetramer. Mg(2+) serves as cofactor. It depends on Mn(2+) as a cofactor. As to expression, expressed in roots, stems, leaves, flowers and siliques.

The protein localises to the plastid. The protein resides in the chloroplast. It carries out the reaction 3-methyl-2-oxobutanoate + acetyl-CoA + H2O = (2S)-2-isopropylmalate + CoA + H(+). It functions in the pathway amino-acid biosynthesis; L-leucine biosynthesis; L-leucine from 3-methyl-2-oxobutanoate: step 1/4. Feedback inhibition by Leu. Its function is as follows. Catalyzes the condensation of the acetyl group of acetyl-CoA with 3-methyl-2-oxobutanoate (2-oxoisovalerate) to form 3-carboxy-3-hydroxy-4-methylpentanoate (2-isopropylmalate). Involved in Leu biosynthesis, but does not participate in the chain elongation of glucosinolates. In Arabidopsis thaliana (Mouse-ear cress), this protein is 2-isopropylmalate synthase 2, chloroplastic.